A 449-amino-acid chain; its full sequence is Tripartite motif-containing protein 64B (449 aa).

The RING-type zinc-finger motif lies at 15–56 (CCICVNYFIDPVTIDCGHSFCRPCLCLCSEEGRAPMRCPSCR). The B box-type zinc finger occupies 87–128 (SSDNICVLHEETKELFCEADKRLLCGPCSESPEHMAHSHSPI). 4 residues coordinate Zn(2+): C92, H95, C114, and H120. The stretch at 189–225 (LDEEEQRHLQALEREAEELFQQLQDSQVRMTQHLERM) forms a coiled coil. The B30.2/SPRY domain occupies 268–449 (ELTSWCITGV…LRPFFCFGCT (182 aa)).

Belongs to the TRIM/RBCC family.

The protein is Tripartite motif-containing protein 64B (TRIM64B) of Homo sapiens (Human).